Reading from the N-terminus, the 581-residue chain is Proline--tRNA ligase (581 aa).

The protein belongs to the class-II aminoacyl-tRNA synthetase family. ProS type 1 subfamily. As to quaternary structure, homodimer.

The protein resides in the cytoplasm. It catalyses the reaction tRNA(Pro) + L-proline + ATP = L-prolyl-tRNA(Pro) + AMP + diphosphate. Catalyzes the attachment of proline to tRNA(Pro) in a two-step reaction: proline is first activated by ATP to form Pro-AMP and then transferred to the acceptor end of tRNA(Pro). As ProRS can inadvertently accommodate and process non-cognate amino acids such as alanine and cysteine, to avoid such errors it has two additional distinct editing activities against alanine. One activity is designated as 'pretransfer' editing and involves the tRNA(Pro)-independent hydrolysis of activated Ala-AMP. The other activity is designated 'posttransfer' editing and involves deacylation of mischarged Ala-tRNA(Pro). The misacylated Cys-tRNA(Pro) is not edited by ProRS. This Acidovorax ebreus (strain TPSY) (Diaphorobacter sp. (strain TPSY)) protein is Proline--tRNA ligase.